A 189-amino-acid chain; its full sequence is Ribosome hibernation promotion factor (189 aa).

Belongs to the HPF/YfiA ribosome-associated protein family. Long HPF subfamily. In terms of assembly, interacts with 100S ribosomes. Not associated with 70S ribosome monomers, about 1 monomer per ribosome.

It localises to the cytoplasm. Its function is as follows. Required for dimerization of active 70S ribosomes into 100S ribosomes in stationary phase; 100S ribosomes are translationally inactive and sometimes present during exponential growth. May not be the only factor implicated. Might negatively regulate the activity of the sigma-54 factor (SigL). The chain is Ribosome hibernation promotion factor (yvyD) from Bacillus subtilis (strain 168).